A 254-amino-acid chain; its full sequence is Metalloprotease YcaL (254 aa).

The first 19 residues, Met1 to Gly19, serve as a signal peptide directing secretion. Cys20 is lipidated: N-palmitoyl cysteine. A lipid anchor (S-diacylglycerol cysteine) is attached at Cys20. A Zn(2+)-binding site is contributed by His134. Glu135 is a catalytic residue. His138 and Glu193 together coordinate Zn(2+). The interval Gly227–Lys254 is disordered. A compositionally biased stretch (basic and acidic residues) spans Arg242–Lys254.

It belongs to the peptidase M48B family. Zn(2+) serves as cofactor.

The protein resides in the cell inner membrane. In terms of biological role, involved in the degradation of the LPS-assembly protein LptD. Degrades LptD that have engaged the Bam complex but are stalled at an early step in the outer membrane protein assembly process. The polypeptide is Metalloprotease YcaL (ycaL) (Escherichia coli (strain K12)).